The primary structure comprises 577 residues: MPKTINVRVTTMDAELEFAIQPNTTGKQLFDQVVKTIGLREIWFFGLQYQDTKGFFTWLKLNKKVTAQDVRKESPLLFKFRAKFYPEDVSEELIQDITQRLFFLQVKEDILNDDIYCPPETAVLLASYAVQSKYGDFNKEVHKSGYLAGDRLLPQRVLEQHKLNKDQWEERIQVWHEEHRGMLREDAVLEYLKIAQDLEMYGVNYFSIKNKKGSELWLGVDALGLNIYEQNDRLTPKIGFPWSEIRNISFNDKKFVIKPIDKKAPDFVFYAPRLRINKRILALCMGNHELYMRRRKPDTIEVQQMKAQAREEKHQKQMERALLENEKKKREMAEKEKEKIEREKEELMERLKQIEEQTKKAQQELEEQTRRALELEQERKRAQSEAEKLAKERQEAEEAKEALLQASQDQKKTQEQLALEMAELTARISQLEMARQKKESEAVEWQQKAQMVQEDLEKTRAELKTAMSTPHVAEPAENEQDEQDENGAEASAELRADAMAKDRSEEERTTEAEKNERVQKHLKALTSELANARDESKKTANDMIHAENMRLGRDKYKTLRQIRQGNTKQRIDEFESM.

The 294-residue stretch at 2 to 295 (PKTINVRVTT…GNHELYMRRR (294 aa)) folds into the FERM domain. Phosphoserine is present on S74. Residue K79 is modified to N6-acetyllysine. N6-succinyllysine is present on K83. Residues 115-120 (IYCPPE) carry the [IL]-x-C-x-x-[DE] motif motif. Y116 bears the Phosphotyrosine mark. C117 is subject to S-nitrosocysteine. K139 and K165 each carry N6-acetyllysine. The span at 375–401 (LEQERKRAQSEAEKLAKERQEAEEAKE) shows a compositional bias: basic and acidic residues. 2 disordered regions span residues 375–409 (LEQE…ASQD) and 466–518 (AMST…NERV). S407 is modified (phosphoserine). Over residues 476–487 (AENEQDEQDENG) the composition is skewed to acidic residues. Positions 492–518 (AELRADAMAKDRSEEERTTEAEKNERV) are enriched in basic and acidic residues. Position 527 is a phosphoserine (S527). The residue at position 558 (T558) is a Phosphothreonine; by ROCK2 and STK10.

In resting T-cells, part of a PAG1-NHERF1-MSN complex which is disrupted upon TCR activation. Interacts with NHERF1. Interacts with PPP1R16B. Interacts with PDZD8. Interacts with SELPLG and SYK; these interactions mediate the activation of SYK by SELPLG. Interacts with PDPN (via cytoplasmic domain); this interaction activates RHOA and promotes epithelial-mesenchymal transition. Interacts with SPN/CD43 cytoplasmic tail. Interacts with CD44. Interacts with ICAM2. Interacts with ICAM3 (via C-terminus). Interacts with PDZD8. Interacts with F-actin. Interacts with CD46. Interacts with PTPN6. In terms of processing, phosphorylation on Thr-558 is crucial for the formation of microvilli-like structures. Phosphorylation by ROCK2 suppresses the head-to-tail association of the N-terminal and C-terminal halves resulting in an opened conformation which is capable of actin and membrane-binding. Phosphorylation on Thr-558 by STK10 negatively regulates lymphocyte migration and polarization. Post-translationally, S-nitrosylation of Cys-117 is induced by interferon-gamma and oxidatively-modified low-densitity lipoprotein (LDL(ox)) implicating the iNOS-S100A8/9 transnitrosylase complex.

The protein localises to the cell membrane. It localises to the cytoplasm. The protein resides in the cytoskeleton. Its subcellular location is the apical cell membrane. It is found in the cell projection. The protein localises to the microvillus membrane. It localises to the microvillus. With respect to regulation, a head-to-tail association, of the N-terminal and C-terminal halves results in a closed conformation (inactive form) which is incapable of actin or membrane-binding. Its function is as follows. Ezrin-radixin-moesin (ERM) family protein that connects the actin cytoskeleton to the plasma membrane and thereby regulates the structure and function of specific domains of the cell cortex. Tethers actin filaments by oscillating between a resting and an activated state providing transient interactions between moesin and the actin cytoskeleton. Once phosphorylated on its C-terminal threonine, moesin is activated leading to interaction with F-actin and cytoskeletal rearrangement. These rearrangements regulate many cellular processes, including cell shape determination, membrane transport, and signal transduction. The role of moesin is particularly important in immunity acting on both T and B-cells homeostasis and self-tolerance, regulating lymphocyte egress from lymphoid organs. Modulates phagolysosomal biogenesis in macrophages. Participates also in immunologic synapse formation. This is Moesin from Bos taurus (Bovine).